Consider the following 216-residue polypeptide: RNA pyrophosphohydrolase (216 aa).

A Nudix hydrolase domain is found at Gly-6–Thr-149. The short motif at Gly-38–Gly-59 is the Nudix box element. The segment at Ala-159–Thr-191 is disordered.

It belongs to the Nudix hydrolase family. RppH subfamily. The cofactor is a divalent metal cation.

Accelerates the degradation of transcripts by removing pyrophosphate from the 5'-end of triphosphorylated RNA, leading to a more labile monophosphorylated state that can stimulate subsequent ribonuclease cleavage. The sequence is that of RNA pyrophosphohydrolase from Burkholderia pseudomallei (strain 668).